Reading from the N-terminus, the 442-residue chain is NADH-quinone oxidoreductase subunit D (442 aa).

The protein belongs to the complex I 49 kDa subunit family. As to quaternary structure, NDH-1 is composed of 14 different subunits. Subunits NuoB, C, D, E, F, and G constitute the peripheral sector of the complex.

The protein localises to the cell membrane. It carries out the reaction a quinone + NADH + 5 H(+)(in) = a quinol + NAD(+) + 4 H(+)(out). Functionally, NDH-1 shuttles electrons from NADH, via FMN and iron-sulfur (Fe-S) centers, to quinones in the respiratory chain. The immediate electron acceptor for the enzyme in this species is believed to be a menaquinone. Couples the redox reaction to proton translocation (for every two electrons transferred, four hydrogen ions are translocated across the cytoplasmic membrane), and thus conserves the redox energy in a proton gradient. This Mycolicibacterium smegmatis (strain ATCC 700084 / mc(2)155) (Mycobacterium smegmatis) protein is NADH-quinone oxidoreductase subunit D.